The primary structure comprises 1552 residues: Nonribosomal peptide synthetase acrB (1552 aa).

The tract at residues 129-564 (ASFAQERIWF…PVANLAIFDE (436 aa)) is condensation. Residues 594 to 999 (RHCKAHPRDV…RMEGSAQVKI (406 aa)) are adenylation. A Carrier domain is found at 1110–1186 (APLGVEEEVM…AMARLLQPQE (77 aa)). Position 1146 is an O-(pantetheine 4'-phosphoryl)serine (serine 1146). The tract at residues 1226–1464 (LTGATGFLGR…DFVGVDAVAS (239 aa)) is thiolester reductase (R) domain.

The protein belongs to the NRP synthetase family.

It functions in the pathway secondary metabolite biosynthesis. Nonribosomal peptide synthetase; part of the cluster that mediates the biosynthesis of acurin A, a highly reduced polyketide coupled to a serine via a peptide bond. The activities of the highly reducing polyketide synthase acrA and the nonribosomal peptide synthetase acrB are collectively responsible for the synthesis of the acurin A core structure with a heptaketide backbone produced by acrA covalently fused to a L-serine by acrB. After the formation of the PK-NRP hybrid product, it is detached from acrB by reductive release to set up the formation of the lactam ring by aldol condensation. The hydrolyase acrC then catalyzes water loss to generate a double bond in the ring. This double bond is probably reduced, which is followed by three oxidations at C-22 to generate the carboxylic acid moiety, involving probably the FAD-binding monooxygenase acrE and the cytochrome P450 monooxygenases acrD and acrF. Finally, a last methylation step performed by the O-methyltransferase acrG leads to the production of acurin A. This Aspergillus aculeatus (strain ATCC 16872 / CBS 172.66 / WB 5094) protein is Nonribosomal peptide synthetase acrB.